A 611-amino-acid chain; its full sequence is tRNA uridine 5-carboxymethylaminomethyl modification enzyme MnmG (611 aa).

14 to 19 lines the FAD pocket; the sequence is GAGHAG. 274 to 288 serves as a coordination point for NAD(+); sequence GPRYCPSIEDKIVKF.

The protein belongs to the MnmG family. Homodimer. Heterotetramer of two MnmE and two MnmG subunits. Requires FAD as cofactor.

It localises to the cytoplasm. Its function is as follows. NAD-binding protein involved in the addition of a carboxymethylaminomethyl (cmnm) group at the wobble position (U34) of certain tRNAs, forming tRNA-cmnm(5)s(2)U34. This is tRNA uridine 5-carboxymethylaminomethyl modification enzyme MnmG from Chlamydia caviae (strain ATCC VR-813 / DSM 19441 / 03DC25 / GPIC) (Chlamydophila caviae).